A 90-amino-acid chain; its full sequence is Small ribosomal subunit protein uS17 (90 aa).

It belongs to the universal ribosomal protein uS17 family. As to quaternary structure, part of the 30S ribosomal subunit.

In terms of biological role, one of the primary rRNA binding proteins, it binds specifically to the 5'-end of 16S ribosomal RNA. The protein is Small ribosomal subunit protein uS17 of Cutibacterium acnes (strain DSM 16379 / KPA171202) (Propionibacterium acnes).